A 255-amino-acid polypeptide reads, in one-letter code: Large ribosomal subunit protein uL4 (255 aa).

The protein belongs to the universal ribosomal protein uL4 family. In terms of assembly, part of the 50S ribosomal subunit.

Its function is as follows. One of the primary rRNA binding proteins, this protein initially binds near the 5'-end of the 23S rRNA. It is important during the early stages of 50S assembly. It makes multiple contacts with different domains of the 23S rRNA in the assembled 50S subunit and ribosome. Functionally, forms part of the polypeptide exit tunnel. The chain is Large ribosomal subunit protein uL4 from Thermococcus onnurineus (strain NA1).